The primary structure comprises 1556 residues: Ferredoxin-dependent glutamate synthase 2 (1556 aa).

Catalysis depends on cysteine 37, which acts as the For GATase activity. The Glutamine amidotransferase type-2 domain maps to 37-431 (CGVGFIANLR…PGQMIAVDLA (395 aa)). Residues cysteine 1173, cysteine 1179, and cysteine 1184 each contribute to the [3Fe-4S] cluster site. The interval 1533 to 1556 (PSEKDSPEANGDVSLTGEKTLTSV) is disordered.

This sequence belongs to the glutamate synthase family. [3Fe-4S] cluster is required as a cofactor. The cofactor is FAD. It depends on FMN as a cofactor.

It catalyses the reaction 2 oxidized [2Fe-2S]-[ferredoxin] + 2 L-glutamate = L-glutamine + 2 reduced [2Fe-2S]-[ferredoxin] + 2-oxoglutarate + 2 H(+). It functions in the pathway amino-acid biosynthesis; L-glutamate biosynthesis via GLT pathway; L-glutamate from 2-oxoglutarate and L-glutamine (ferredoxin route): step 1/1. Its pathway is energy metabolism; nitrogen metabolism. This chain is Ferredoxin-dependent glutamate synthase 2 (gltS), found in Synechocystis sp. (strain ATCC 27184 / PCC 6803 / Kazusa).